The primary structure comprises 330 residues: MISLESQVLERHLSFFDGKSVLFAGGISDNFPQTLASKCSSIQIWSCYFDYARTQSAVNFSVEFQGQADLIVYYWTKNKQEVNFQLLQLLAQASIGQEILIIGENRCGVRSVEKTLAPYGEIAKIDSARRCGLYHFSLQNKPHFELKNFWRTYQHSTLENLTIYSLPGVFSAAELDTGTELLLSTIDNKIKGKVLDLGCGAGVIGSMIKKRAPNAQITMTDIHAMALESARKTLSENQLQGEVYASDVFSDIEGKFDLIISNPPFHDGIDTAYRTVKELITQAKWHLNQGGELRIVANAFLPYPELLRQYFNDYQVLAQTGKFKVYSVKN.

It belongs to the methyltransferase superfamily. RsmC family. In terms of assembly, monomer.

The protein resides in the cytoplasm. The catalysed reaction is guanosine(1207) in 16S rRNA + S-adenosyl-L-methionine = N(2)-methylguanosine(1207) in 16S rRNA + S-adenosyl-L-homocysteine + H(+). Functionally, specifically methylates the guanine in position 1207 of 16S rRNA in the 30S particle. In Haemophilus influenzae (strain PittGG), this protein is Ribosomal RNA small subunit methyltransferase C.